Reading from the N-terminus, the 300-residue chain is Putative S-adenosyl-L-methionine-dependent methyltransferase Mkms_0379 (300 aa).

Residues aspartate 128 and 157–158 (DL) contribute to the S-adenosyl-L-methionine site.

It belongs to the UPF0677 family.

Functionally, exhibits S-adenosyl-L-methionine-dependent methyltransferase activity. This is Putative S-adenosyl-L-methionine-dependent methyltransferase Mkms_0379 from Mycobacterium sp. (strain KMS).